Reading from the N-terminus, the 264-residue chain is tRNA (guanine-N(1)-)-methyltransferase (264 aa).

S-adenosyl-L-methionine contacts are provided by residues Gly-125 and 145–150 (LGDFVL).

It belongs to the RNA methyltransferase TrmD family. As to quaternary structure, homodimer.

Its subcellular location is the cytoplasm. It carries out the reaction guanosine(37) in tRNA + S-adenosyl-L-methionine = N(1)-methylguanosine(37) in tRNA + S-adenosyl-L-homocysteine + H(+). Its function is as follows. Specifically methylates guanosine-37 in various tRNAs. This is tRNA (guanine-N(1)-)-methyltransferase from Burkholderia mallei (strain NCTC 10247).